Reading from the N-terminus, the 475-residue chain is tRNA-2-methylthio-N(6)-dimethylallyladenosine synthase (475 aa).

Residues 3–120 (KKLHIKTWGC…LPEMIDQIRA (118 aa)) enclose the MTTase N-terminal domain. [4Fe-4S] cluster contacts are provided by Cys12, Cys49, Cys83, Cys157, Cys161, and Cys164. The 233-residue stretch at 143 to 375 (RADGPSAFVS…QDRITQQAMR (233 aa)) folds into the Radical SAM core domain. The TRAM domain occupies 378–441 (RQMVGTVQRI…TNSLRGVFIR (64 aa)).

The protein belongs to the methylthiotransferase family. MiaB subfamily. Monomer. Requires [4Fe-4S] cluster as cofactor.

The protein localises to the cytoplasm. It catalyses the reaction N(6)-dimethylallyladenosine(37) in tRNA + (sulfur carrier)-SH + AH2 + 2 S-adenosyl-L-methionine = 2-methylsulfanyl-N(6)-dimethylallyladenosine(37) in tRNA + (sulfur carrier)-H + 5'-deoxyadenosine + L-methionine + A + S-adenosyl-L-homocysteine + 2 H(+). Catalyzes the methylthiolation of N6-(dimethylallyl)adenosine (i(6)A), leading to the formation of 2-methylthio-N6-(dimethylallyl)adenosine (ms(2)i(6)A) at position 37 in tRNAs that read codons beginning with uridine. This chain is tRNA-2-methylthio-N(6)-dimethylallyladenosine synthase, found in Shewanella halifaxensis (strain HAW-EB4).